We begin with the raw amino-acid sequence, 167 residues long: Small ribosomal subunit protein uS5 (167 aa).

The region spanning 12-75 (LQEKLIAVNR…EKARRNMVTI (64 aa)) is the S5 DRBM domain.

This sequence belongs to the universal ribosomal protein uS5 family. In terms of assembly, part of the 30S ribosomal subunit. Contacts proteins S4 and S8.

Functionally, with S4 and S12 plays an important role in translational accuracy. In terms of biological role, located at the back of the 30S subunit body where it stabilizes the conformation of the head with respect to the body. The sequence is that of Small ribosomal subunit protein uS5 from Vibrio vulnificus (strain CMCP6).